Here is an 867-residue protein sequence, read N- to C-terminus: Bifunctional isopimaradiene synthase, chloroplastic (867 aa).

A chloroplast-targeting transit peptide spans 1–68 (MALLSSSLSS…VGEGTTSLPY (68 aa)). Lys-267 is a binding site for substrate. The Mg(2+) site is built by Asp-400 and Asp-402. A DXDD motif motif is present at residues 400–403 (DIDD). Residue Lys-487 coordinates substrate. Residues Asp-619, Asp-623, Asn-763, Thr-767, and Glu-771 each contribute to the Mg(2+) site. A DDXXD motif motif is present at residues 619–623 (DDLYD).

It belongs to the terpene synthase family. Tpsd subfamily. Requires Mg(2+) as cofactor.

It localises to the plastid. Its subcellular location is the chloroplast. The catalysed reaction is (2E,6E,10E)-geranylgeranyl diphosphate = (+)-copalyl diphosphate. It carries out the reaction (+)-copalyl diphosphate = isopimara-7,15-diene + diphosphate. Its pathway is terpene metabolism; oleoresin biosynthesis. Involved in defensive oleoresin formation in conifers in response to insect attack or other injury. Involved in diterpene (C20) olefins biosynthesis. Bifunctional enzyme that catalyzes two sequential cyclizations of geranylgeranyl diphosphate (GGPP) to isopimara-7,15-diene. The protein is Bifunctional isopimaradiene synthase, chloroplastic (TPS-ISO) of Picea abies (Norway spruce).